A 319-amino-acid chain; its full sequence is MNYLEFEKPLSEIEGKAEELRALARGNREMDVEKEASALDKKAETLLKDLYKDLTPWRKCQVARHPDRPHCKDYIEGLFTEYTPLAGDRNFADDHAIMGGLARFNDNPVVVIGQEKGHDTKTRIERNFGMARPEGYRKAIRLMEMAHRFRLPVITLVDTPGAYPGKGAEERGQAEAIARATQKCLEIGVPLVAVVIGEGGSGGAVALATANRIAMLEHSVYSVISPEGCASILWKDAEKMREAAEALRLTAQDLHKLGVIDRIIKEPLGGAQRGRRETVDAVGKAIEMMLKELVGRKPEWLVKDRRNKFLDMGSKGLAA.

Positions 38–292 (ALDKKAETLL…GKAIEMMLKE (255 aa)) constitute a CoA carboxyltransferase C-terminal domain.

Belongs to the AccA family. Acetyl-CoA carboxylase is a heterohexamer composed of biotin carboxyl carrier protein (AccB), biotin carboxylase (AccC) and two subunits each of ACCase subunit alpha (AccA) and ACCase subunit beta (AccD).

The protein localises to the cytoplasm. It carries out the reaction N(6)-carboxybiotinyl-L-lysyl-[protein] + acetyl-CoA = N(6)-biotinyl-L-lysyl-[protein] + malonyl-CoA. It participates in lipid metabolism; malonyl-CoA biosynthesis; malonyl-CoA from acetyl-CoA: step 1/1. Its function is as follows. Component of the acetyl coenzyme A carboxylase (ACC) complex. First, biotin carboxylase catalyzes the carboxylation of biotin on its carrier protein (BCCP) and then the CO(2) group is transferred by the carboxyltransferase to acetyl-CoA to form malonyl-CoA. This is Acetyl-coenzyme A carboxylase carboxyl transferase subunit alpha from Cereibacter sphaeroides (strain ATCC 17029 / ATH 2.4.9) (Rhodobacter sphaeroides).